Consider the following 341-residue polypeptide: COP9 signalosome complex subunit 6 (341 aa).

The disordered stretch occupies residues 1–43 (MEQMEVDVDMSAKPSTSSSAAAGSSMAVDKTADQNPQPQGNIM). A compositionally biased stretch (low complexity) spans 11-27 (SAKPSTSSSAAAGSSMA). Residues 54-188 (ISLHPLVIMN…LKLFESLIDL (135 aa)) form the MPN domain.

The protein belongs to the peptidase M67A family. CSN6 subfamily. As to quaternary structure, component of the CSN complex, probably composed of CSN1b, alien/CSN2, CSN3, CSN4, CSN5, CSN6, CSN7 and CSN8.

It localises to the cytoplasm. It is found in the nucleus. Functionally, component of the COP9 signalosome complex (CSN), a complex involved in various cellular and developmental processes. The CSN complex is an essential regulator of the ubiquitin (Ubl) conjugation pathway by mediating the deneddylation of the cullin subunits of the SCF-type E3 ligase complexes, leading to decrease the Ubl ligase activity of SCF. The CSN complex plays an essential role in oogenesis and embryogenesis and is required for proper photoreceptor R cell differentiation and promote lamina glial cell migration or axon targeting. It also promotes Ubl-dependent degradation of cyclin E (CycE) during early oogenesis. The sequence is that of COP9 signalosome complex subunit 6 (CSN6) from Drosophila melanogaster (Fruit fly).